Here is a 258-residue protein sequence, read N- to C-terminus: Sec-independent protein translocase protein TatC (258 aa).

Residues Ser2 to Cys23 lie on the Cytoplasmic side of the membrane. Residues Ile24–Leu44 form a helical membrane-spanning segment. The Periplasmic portion of the chain corresponds to Val45–Thr75. A helical membrane pass occupies residues Phe76–Ala96. Topologically, residues Pro97 to Ser115 are cytoplasmic. A helical membrane pass occupies residues Leu116–Phe136. Over Leu137 to Ser156 the chain is Periplasmic. A helical membrane pass occupies residues Phe157 to Leu177. Residues Leu178–Lys192 lie on the Cytoplasmic side of the membrane. A helical membrane pass occupies residues Arg193–Pro210. Position 211 (Asp211) is a topological domain, periplasmic. The chain crosses the membrane as a helical span at residues Val212 to Phe232. Residues Ser233–Glu258 lie on the Cytoplasmic side of the membrane.

It belongs to the TatC family. In terms of assembly, the Tat system comprises two distinct complexes: a TatABC complex, containing multiple copies of TatA, TatB and TatC subunits, and a separate TatA complex, containing only TatA subunits. Substrates initially bind to the TatABC complex, which probably triggers association of the separate TatA complex to form the active translocon. TatC can form a distinct, stable, multimeric complex independent of TatA and TatB. Each of TatA, TatB and TatC are able to interact in pairs without the third partner. Interacts with the signal sequence of DmsA and DmsD.

The protein localises to the cell inner membrane. Functionally, part of the twin-arginine translocation (Tat) system that transports large folded proteins containing a characteristic twin-arginine motif in their signal peptide across membranes. Together with TatB, TatC is part of a receptor directly interacting with Tat signal peptides. The chain is Sec-independent protein translocase protein TatC from Escherichia coli (strain K12).